The primary structure comprises 353 residues: Photosystem II D2 protein (353 aa).

Threonine 2 is modified (N-acetylthreonine). A Phosphothreonine modification is found at threonine 2. Residues 41 to 61 form a helical membrane-spanning segment; it reads CAYFALGGWFTGTTFVTSWYT. Histidine 118 contributes to the chlorophyll a binding site. A helical membrane pass occupies residues 125-141; sequence GFMLRQFELARSVQLRP. Positions 130 and 143 each coordinate pheophytin a. Residues 153-166 form a helical membrane-spanning segment; sequence VFVSVFLIYPLGQS. Histidine 198 provides a ligand contact to chlorophyll a. The chain crosses the membrane as a helical span at residues 208–228; sequence AALLCAIHGATVENTLFEDGD. Histidine 215 and phenylalanine 262 together coordinate a plastoquinone. Position 215 (histidine 215) interacts with Fe cation. Residue histidine 269 coordinates Fe cation. Residues 279–295 form a helical membrane-spanning segment; that stretch reads GLWMSALGVVGLALNLR.

The protein belongs to the reaction center PufL/M/PsbA/D family. PSII is composed of 1 copy each of membrane proteins PsbA, PsbB, PsbC, PsbD, PsbE, PsbF, PsbH, PsbI, PsbJ, PsbK, PsbL, PsbM, PsbT, PsbX, PsbY, PsbZ, Psb30/Ycf12, at least 3 peripheral proteins of the oxygen-evolving complex and a large number of cofactors. It forms dimeric complexes. The D1/D2 heterodimer binds P680, chlorophylls that are the primary electron donor of PSII, and subsequent electron acceptors. It shares a non-heme iron and each subunit binds pheophytin, quinone, additional chlorophylls, carotenoids and lipids. There is also a Cl(-1) ion associated with D1 and D2, which is required for oxygen evolution. The PSII complex binds additional chlorophylls, carotenoids and specific lipids. is required as a cofactor.

Its subcellular location is the plastid. It localises to the chloroplast thylakoid membrane. The catalysed reaction is 2 a plastoquinone + 4 hnu + 2 H2O = 2 a plastoquinol + O2. In terms of biological role, photosystem II (PSII) is a light-driven water:plastoquinone oxidoreductase that uses light energy to abstract electrons from H(2)O, generating O(2) and a proton gradient subsequently used for ATP formation. It consists of a core antenna complex that captures photons, and an electron transfer chain that converts photonic excitation into a charge separation. The D1/D2 (PsbA/PsbD) reaction center heterodimer binds P680, the primary electron donor of PSII as well as several subsequent electron acceptors. D2 is needed for assembly of a stable PSII complex. This chain is Photosystem II D2 protein, found in Ceratophyllum demersum (Rigid hornwort).